We begin with the raw amino-acid sequence, 297 residues long: Homoserine kinase (297 aa).

82–92 (PVSRGLGSSAA) is an ATP binding site.

It belongs to the GHMP kinase family. Homoserine kinase subfamily.

The protein localises to the cytoplasm. The enzyme catalyses L-homoserine + ATP = O-phospho-L-homoserine + ADP + H(+). It functions in the pathway amino-acid biosynthesis; L-threonine biosynthesis; L-threonine from L-aspartate: step 4/5. Functionally, catalyzes the ATP-dependent phosphorylation of L-homoserine to L-homoserine phosphate. The chain is Homoserine kinase from Clostridium botulinum (strain Kyoto / Type A2).